A 156-amino-acid chain; its full sequence is Small ribosomal subunit protein uS7 (156 aa).

It belongs to the universal ribosomal protein uS7 family. In terms of assembly, part of the 30S ribosomal subunit. Contacts proteins S9 and S11.

Its function is as follows. One of the primary rRNA binding proteins, it binds directly to 16S rRNA where it nucleates assembly of the head domain of the 30S subunit. Is located at the subunit interface close to the decoding center, probably blocks exit of the E-site tRNA. This Prochlorococcus marinus (strain MIT 9303) protein is Small ribosomal subunit protein uS7.